Reading from the N-terminus, the 395-residue chain is Elongation factor Ts, mitochondrial (395 aa).

Residues 1-63 (MAFARAVRRP…RGFGNFIRSF (63 aa)) constitute a mitochondrion transit peptide.

This sequence belongs to the EF-Ts family.

It is found in the mitochondrion. Its function is as follows. Associates with the EF-Tu.GDP complex and induces the exchange of GDP to GTP. It remains bound to the aminoacyl-tRNA.EF-Tu.GTP complex up to the GTP hydrolysis stage on the ribosome. This chain is Elongation factor Ts, mitochondrial, found in Arabidopsis thaliana (Mouse-ear cress).